Consider the following 395-residue polypeptide: DNA polymerase IV (395 aa).

The 181-residue stretch at 7 to 187 (FFHVDIDAFF…LPLKDVWGVG (181 aa)) folds into the UmuC domain. Positions 11 and 105 each coordinate Mg(2+). Residue glutamate 106 is part of the active site.

The protein belongs to the DNA polymerase type-Y family. Monomer. Mg(2+) serves as cofactor.

It is found in the cytoplasm. It carries out the reaction DNA(n) + a 2'-deoxyribonucleoside 5'-triphosphate = DNA(n+1) + diphosphate. Poorly processive, error-prone DNA polymerase involved in untargeted mutagenesis. Copies undamaged DNA at stalled replication forks, which arise in vivo from mismatched or misaligned primer ends. These misaligned primers can be extended by PolIV. Exhibits no 3'-5' exonuclease (proofreading) activity. May be involved in translesional synthesis, in conjunction with the beta clamp from PolIII. The polypeptide is DNA polymerase IV (Treponema denticola (strain ATCC 35405 / DSM 14222 / CIP 103919 / JCM 8153 / KCTC 15104)).